A 393-amino-acid chain; its full sequence is uncharacterized protein (393 aa).

67-74 (GPDGMGKS) contributes to the ATP binding site.

This is an uncharacterized protein from Mycobacterium tuberculosis (strain CDC 1551 / Oshkosh).